Reading from the N-terminus, the 248-residue chain is Ubiquinone/menaquinone biosynthesis C-methyltransferase UbiE (248 aa).

S-adenosyl-L-methionine is bound by residues Ser68 and Asp92.

The protein belongs to the class I-like SAM-binding methyltransferase superfamily. MenG/UbiE family.

It carries out the reaction a 2-demethylmenaquinol + S-adenosyl-L-methionine = a menaquinol + S-adenosyl-L-homocysteine + H(+). The catalysed reaction is a 2-methoxy-6-(all-trans-polyprenyl)benzene-1,4-diol + S-adenosyl-L-methionine = a 5-methoxy-2-methyl-3-(all-trans-polyprenyl)benzene-1,4-diol + S-adenosyl-L-homocysteine + H(+). Its pathway is quinol/quinone metabolism; menaquinone biosynthesis; menaquinol from 1,4-dihydroxy-2-naphthoate: step 2/2. The protein operates within cofactor biosynthesis; ubiquinone biosynthesis. Methyltransferase required for the conversion of demethylmenaquinol (DMKH2) to menaquinol (MKH2) and the conversion of 2-polyprenyl-6-methoxy-1,4-benzoquinol (DDMQH2) to 2-polyprenyl-3-methyl-6-methoxy-1,4-benzoquinol (DMQH2). This chain is Ubiquinone/menaquinone biosynthesis C-methyltransferase UbiE, found in Rickettsia bellii (strain RML369-C).